The following is a 465-amino-acid chain: UDP-N-acetylglucosamine 1-carboxyvinyltransferase (465 aa).

Residue 22 to 23 (KN) coordinates phosphoenolpyruvate. UDP-N-acetyl-alpha-D-glucosamine is bound at residue arginine 94. The Proton donor role is filled by cysteine 119. Cysteine 119 carries the 2-(S-cysteinyl)pyruvic acid O-phosphothioketal modification. Positions 313 and 335 each coordinate UDP-N-acetyl-alpha-D-glucosamine.

It belongs to the EPSP synthase family. MurA subfamily.

The protein resides in the cytoplasm. It catalyses the reaction phosphoenolpyruvate + UDP-N-acetyl-alpha-D-glucosamine = UDP-N-acetyl-3-O-(1-carboxyvinyl)-alpha-D-glucosamine + phosphate. It participates in cell wall biogenesis; peptidoglycan biosynthesis. Its function is as follows. Cell wall formation. Adds enolpyruvyl to UDP-N-acetylglucosamine. This is UDP-N-acetylglucosamine 1-carboxyvinyltransferase from Protochlamydia amoebophila (strain UWE25).